The following is a 184-amino-acid chain: Glucosamine 6-phosphate N-acetyltransferase (184 aa).

In terms of domain architecture, N-acetyltransferase spans 39 to 184; the sequence is LVLRPLCTAD…ENYMCRRFLK (146 aa). Substrate-binding positions include Thr61, 108–111, and 120–122; these read KFIH and EDV. Acetyl-CoA is bound at residue 130-135; sequence GKQLGK. 151–152 contributes to the substrate binding site; it reads YK. 165–167 contributes to the acetyl-CoA binding site; that stretch reads YKK. Residues Glu175 and Arg181 each contribute to the substrate site.

The protein belongs to the acetyltransferase family. GNA1 subfamily. As to quaternary structure, homodimer. As to expression, ubiquitous. Shows a strong differential expression pattern in adult hematopoietic precursor cells.

The protein resides in the golgi apparatus membrane. It is found in the endosome membrane. The enzyme catalyses D-glucosamine 6-phosphate + acetyl-CoA = N-acetyl-D-glucosamine 6-phosphate + CoA + H(+). It functions in the pathway nucleotide-sugar biosynthesis; UDP-N-acetyl-alpha-D-glucosamine biosynthesis; N-acetyl-alpha-D-glucosamine 1-phosphate from alpha-D-glucosamine 6-phosphate (route I): step 1/2. The sequence is that of Glucosamine 6-phosphate N-acetyltransferase (Gnpnat1) from Mus musculus (Mouse).